We begin with the raw amino-acid sequence, 547 residues long: Apicoplast pyruvate carrier 1 (547 aa).

Residues 1–33 (MEPRAPPRLSVSSPRRESGATVPSHSPSTLLSC) are disordered. At 1–45 (MEPRAPPRLSVSSPRRESGATVPSHSPSTLLSCASSETATEKRRR) the chain is on the cytoplasmic side. Polar residues predominate over residues 21-33 (TVPSHSPSTLLSC). 12 helical membrane passes run 46-66 (WTGVLSVFGGVLVHVCLGTVY), 126-146 (AWVLASQFAGMTLGMPLGGIA), 167-187 (VGMAPVLLHSYALFVTVFGVI), 189-209 (GVGLGLAYTAPLLCGLAWFPE), 212-232 (GIVSGAITAGFGTGALLFSPL), 278-298 (LLAVCYLLLVSAGAALLRVPA), 345-365 (ALVSWTFWSLWTLFFLNGLAI), 385-405 (ILTETQLALVGAAASACNAVG), 417-437 (GFQTSLMGLSALWSLLLFFLP), 445-465 (LCYALAVSGSFFCLGGNFSVF), 467-487 (SAVASVFGPDAIGHLYGFIFG), and 515-535 (LMGLCTALTAMSVFCLPALSP).

The protein belongs to the major facilitator superfamily. Interacts with apicoplast pyruvate carrier 2.

Its subcellular location is the plastid. The protein resides in the apicoplast. It localises to the membrane. Its function is as follows. Along with apicoplast pyruvate carrier 2, forms apicoplast pyruvate carrier (APC) complex, which transports pyruvate into the apicoplast and may also transport amino acids like methionine, serine, glycine and tryptophan with low efficiency. Required for maintaining pyruvate-dependent metabolic activities in the apicoplast, such as synthesis of fatty acids, isopentenyl pyrophosphate (IPP), dimethylallyl pyrophosphate (DMAPP) and methylerythritol 4-phosphate (MEP). Required for maintaining the integrity of the apicoplast. Required for normal parasite growth. This Toxoplasma gondii protein is Apicoplast pyruvate carrier 1.